A 385-amino-acid polypeptide reads, in one-letter code: Protein-glutamate methylesterase/protein-glutamine glutaminase (385 aa).

Asp53 is subject to 4-aspartylphosphate. A CheB-type methylesterase domain is found at 196-385; sequence KHKTGKIIVV…EIADHVLRRS (190 aa). Catalysis depends on residues Ser208, His234, and Asp330.

This sequence belongs to the CheB family. Phosphorylated by CheA. Phosphorylation of the N-terminal regulatory domain activates the methylesterase activity.

It localises to the cytoplasm. It carries out the reaction [protein]-L-glutamate 5-O-methyl ester + H2O = L-glutamyl-[protein] + methanol + H(+). The enzyme catalyses L-glutaminyl-[protein] + H2O = L-glutamyl-[protein] + NH4(+). Involved in chemotaxis. Part of a chemotaxis signal transduction system that modulates chemotaxis in response to various stimuli. Catalyzes the demethylation of specific methylglutamate residues introduced into the chemoreceptors (methyl-accepting chemotaxis proteins or MCP) by CheR. Also mediates the irreversible deamidation of specific glutamine residues to glutamic acid. The chain is Protein-glutamate methylesterase/protein-glutamine glutaminase from Borreliella burgdorferi (strain ATCC 35210 / DSM 4680 / CIP 102532 / B31) (Borrelia burgdorferi).